Here is a 388-residue protein sequence, read N- to C-terminus: Succinate--CoA ligase [ADP-forming] subunit beta (388 aa).

Positions 9–244 (KQLFAQYGLP…PAQNDAREAH (236 aa)) constitute an ATP-grasp domain. ATP is bound by residues Lys46, 53-55 (GRG), Glu99, Thr102, and Glu107. Mg(2+) contacts are provided by Asn199 and Asp213. Substrate contacts are provided by residues Asn264 and 321–323 (GIV).

It belongs to the succinate/malate CoA ligase beta subunit family. In terms of assembly, heterotetramer of two alpha and two beta subunits. Mg(2+) is required as a cofactor.

It catalyses the reaction succinate + ATP + CoA = succinyl-CoA + ADP + phosphate. It carries out the reaction GTP + succinate + CoA = succinyl-CoA + GDP + phosphate. Its pathway is carbohydrate metabolism; tricarboxylic acid cycle; succinate from succinyl-CoA (ligase route): step 1/1. Functionally, succinyl-CoA synthetase functions in the citric acid cycle (TCA), coupling the hydrolysis of succinyl-CoA to the synthesis of either ATP or GTP and thus represents the only step of substrate-level phosphorylation in the TCA. The beta subunit provides nucleotide specificity of the enzyme and binds the substrate succinate, while the binding sites for coenzyme A and phosphate are found in the alpha subunit. This chain is Succinate--CoA ligase [ADP-forming] subunit beta, found in Edwardsiella ictaluri (strain 93-146).